The following is a 523-amino-acid chain: Cytoplasmic dynein 1 light intermediate chain 1 (523 aa).

A disordered region spans residues 1–45 (MAAVGRVGSFGSSPPGLASTYASGPLANELASGSGGPAAGDDEDG). Residue 74-81 (GEDGAGKT) coordinates ATP. A Phosphoserine modification is found at Ser207. The residue at position 213 (Thr213) is a Phosphothreonine. Disordered stretches follow at residues 387 to 434 (PPTA…DPNM) and 457 to 523 (GSPG…GEAS). Residues Ser398 and Ser405 each carry the phosphoserine modification. The residue at position 408 (Thr408) is a Phosphothreonine. Ser412, Ser419, Ser421, and Ser427 each carry phosphoserine. Over residues 412 to 421 (SVSSNVASVS) the composition is skewed to low complexity. A compositionally biased stretch (gly residues) spans 458–473 (SPGGPGVGGSPGGGAA). Positions 474-483 (GASTSLPPSA) are enriched in low complexity. Phosphoserine occurs at positions 486 and 510. Thr512 and Thr513 each carry phosphothreonine. Position 516 is a phosphoserine (Ser516).

Belongs to the dynein light intermediate chain family. As to quaternary structure, homodimer. The cytoplasmic dynein 1 complex consists of two catalytic heavy chains (HCs) and a number of non-catalytic subunits presented by intermediate chains (ICs), light intermediate chains (LICs) and light chains (LCs); the composition seems to vary in respect to the IC, LIC and LC composition. The heavy chain homodimer serves as a scaffold for the probable homodimeric assembly of the respective non-catalytic subunits. The ICs and LICs bind directly to the HC dimer and the LCs assemble on the IC dimer. Self-associates. Interacts with DYNC1H1; DYNC1LI1 and DYNC1LI2 bind mutually exclusive to DYNC1H1. Interacts with PCNT. Forms a complex with RAB11FIP3 and RAB11A1; the interaction between DYNC1LI1 and RAB11FIP3 is direct and induces DYNC1LI1 localization onto endosomal membrane; the complex regulates endocytic trafficking. Interacts with RUFY3. In terms of processing, phosphorylated during mitosis but not in interphase.

Its subcellular location is the cytoplasm. It localises to the chromosome. The protein localises to the centromere. The protein resides in the kinetochore. It is found in the cytoskeleton. Its subcellular location is the spindle pole. It localises to the recycling endosome membrane. Functionally, acts as one of several non-catalytic accessory components of the cytoplasmic dynein 1 complex that are thought to be involved in linking dynein to cargos and to adapter proteins that regulate dynein function. Cytoplasmic dynein 1 acts as a motor for the intracellular retrograde motility of vesicles and organelles along microtubules. May play a role in binding dynein to membranous organelles or chromosomes. Probably involved in the microtubule-dependent transport of pericentrin. Is required for progress through the spindle assembly checkpoint. The phosphorylated form appears to be involved in the selective removal of MAD1L1 and MAD1L2 but not BUB1B from kinetochores. Forms a functional Rab11/RAB11FIP3/dynein complex onto endosomal membrane that regulates the movement of peripheral sorting endosomes (SE) along microtubule tracks toward the microtubule organizing center/centrosome, generating the endosomal recycling compartment (ERC). The protein is Cytoplasmic dynein 1 light intermediate chain 1 (Dync1li1) of Rattus norvegicus (Rat).